A 916-amino-acid polypeptide reads, in one-letter code: Translation initiation factor IF-2 (916 aa).

The tract at residues 58–317 is disordered; that stretch reads LEAEGHLPGA…GVTVPRGDGG (260 aa). Residues 120-142 are compositionally biased toward low complexity; that stretch reads EKVAASEAADAKPAAGAPADTAK. A compositionally biased stretch (pro residues) spans 195 to 206; sequence SNIPRPAPPRPG. Composition is skewed to gly residues over residues 214–227 and 235–282; these read RPGG…GGRP and SAGG…GRGG. The segment covering 283 to 294 has biased composition (basic residues); that stretch reads GKSKARKSKRAK. One can recognise a tr-type G domain in the interval 409–583; the sequence is IRPPVVTVMG…LTADAGLDLR (175 aa). A G1 region spans residues 418–425; the sequence is GHVDHGKT. GTP is bound at residue 418–425; that stretch reads GHVDHGKT. The segment at 443–447 is G2; that stretch reads GITQH. The interval 468-471 is G3; that stretch reads DTPG. GTP contacts are provided by residues 468-472 and 522-525; these read DTPGH and NKVD. The segment at 522-525 is G4; the sequence is NKVD. The tract at residues 558–560 is G5; it reads SAR.

The protein belongs to the TRAFAC class translation factor GTPase superfamily. Classic translation factor GTPase family. IF-2 subfamily.

Its subcellular location is the cytoplasm. In terms of biological role, one of the essential components for the initiation of protein synthesis. Protects formylmethionyl-tRNA from spontaneous hydrolysis and promotes its binding to the 30S ribosomal subunits. Also involved in the hydrolysis of GTP during the formation of the 70S ribosomal complex. The chain is Translation initiation factor IF-2 from Leifsonia xyli subsp. xyli (strain CTCB07).